We begin with the raw amino-acid sequence, 1437 residues long: Protein CC2D2B (1437 aa).

This Homo sapiens (Human) protein is Protein CC2D2B.